Consider the following 757-residue polypeptide: Glutathione biosynthesis bifunctional protein GshAB (757 aa).

The interval 1 to 337 (MNIQQIVKEK…LGRARLGEVA (337 aa)) is glutamate--cysteine ligase. The ATP-grasp domain maps to 494 to 757 (KKVLAKAGFN…VLGMLFPELV (264 aa)). 521–580 (PLFEGKAVVIKPKSTNFGLGISIFQQGVHDKADFAKAVEIAFREDKEVMVEDYLVGTEYR) provides a ligand contact to ATP. Mg(2+) contacts are provided by D702, E723, and N725. Residues D702, E723, and N725 each contribute to the Mn(2+) site.

The protein in the N-terminal section; belongs to the glutamate--cysteine ligase type 1 family. Type 2 subfamily. As to quaternary structure, monomer. The cofactor is Mg(2+). Mn(2+) serves as cofactor.

It carries out the reaction L-cysteine + L-glutamate + ATP = gamma-L-glutamyl-L-cysteine + ADP + phosphate + H(+). It catalyses the reaction gamma-L-glutamyl-L-cysteine + glycine + ATP = glutathione + ADP + phosphate + H(+). It functions in the pathway sulfur metabolism; glutathione biosynthesis; glutathione from L-cysteine and L-glutamate: step 1/2. It participates in sulfur metabolism; glutathione biosynthesis; glutathione from L-cysteine and L-glutamate: step 2/2. Functionally, synthesizes glutathione from L-glutamate and L-cysteine via gamma-L-glutamyl-L-cysteine. The protein is Glutathione biosynthesis bifunctional protein GshAB of Mannheimia succiniciproducens (strain KCTC 0769BP / MBEL55E).